A 309-amino-acid chain; its full sequence is Glutaminase (309 aa).

Residues serine 64, asparagine 114, glutamate 160, asparagine 167, tyrosine 191, tyrosine 243, and valine 261 each contribute to the substrate site.

Belongs to the glutaminase family. Homotetramer.

It carries out the reaction L-glutamine + H2O = L-glutamate + NH4(+). The sequence is that of Glutaminase from Rhizobium johnstonii (strain DSM 114642 / LMG 32736 / 3841) (Rhizobium leguminosarum bv. viciae).